The chain runs to 346 residues: Phenylalanine--tRNA ligase alpha subunit (346 aa).

Position 258 (E258) interacts with Mg(2+).

This sequence belongs to the class-II aminoacyl-tRNA synthetase family. Phe-tRNA synthetase alpha subunit type 1 subfamily. In terms of assembly, tetramer of two alpha and two beta subunits. It depends on Mg(2+) as a cofactor.

It is found in the cytoplasm. It carries out the reaction tRNA(Phe) + L-phenylalanine + ATP = L-phenylalanyl-tRNA(Phe) + AMP + diphosphate + H(+). The sequence is that of Phenylalanine--tRNA ligase alpha subunit from Protochlamydia amoebophila (strain UWE25).